The following is a 325-amino-acid chain: Probable 2-ketogluconate reductase (325 aa).

NAD(+)-binding positions include 158–159 (RI), threonine 211, 238–240 (ISR), and aspartate 264. Arginine 240 is a catalytic residue. The active site involves glutamate 269. Histidine 288 (proton donor) is an active-site residue. 288-291 (HIGS) provides a ligand contact to NAD(+).

This sequence belongs to the D-isomer specific 2-hydroxyacid dehydrogenase family.

It catalyses the reaction D-gluconate + NADP(+) = 2-dehydro-D-gluconate + NADPH + H(+). This is Probable 2-ketogluconate reductase (yvcT) from Bacillus subtilis (strain 168).